We begin with the raw amino-acid sequence, 375 residues long: MSCPVIELTQQLIRRPSLSPYDAGCQALLIERLQAIGFTVERMDFADTQNFWAWRGQGETLAFAGHTDVVPPGDADRWINPPFEPTIRDGMLFGRGAADMKGSLAAMVVAAERFVAQHPNHTGRLAFLITSDEEASAHNGTVKVVEALMARNERLDYCLVGEPSSIEVVGDVVKNGRRGSLTCNLTIHGVQGHVAYPHLADNPVHRAAPFLNELVAIEWDQGNEFFPATSMQIANIQAGTGSNNVIPGELFVQFNFRFSTELTDEMIKAQVLALLEKHQLRYTVDWWLSGQPFLTARGKLVDAVVNAVEHYNEIKPQLLTTGGTSDGRFIARMGAQVVELGPVNATIHKINECVNAADLQLLARMYQRIMEQLVA.

His66 lines the Zn(2+) pocket. Asp68 is an active-site residue. Zn(2+) is bound at residue Asp99. Glu133 acts as the Proton acceptor in catalysis. Zn(2+)-binding residues include Glu134, Glu162, and His348.

This sequence belongs to the peptidase M20A family. DapE subfamily. As to quaternary structure, homodimer. It depends on Zn(2+) as a cofactor. Requires Co(2+) as cofactor.

The enzyme catalyses N-succinyl-(2S,6S)-2,6-diaminopimelate + H2O = (2S,6S)-2,6-diaminopimelate + succinate. It functions in the pathway amino-acid biosynthesis; L-lysine biosynthesis via DAP pathway; LL-2,6-diaminopimelate from (S)-tetrahydrodipicolinate (succinylase route): step 3/3. Catalyzes the hydrolysis of N-succinyl-L,L-diaminopimelic acid (SDAP), forming succinate and LL-2,6-diaminopimelate (DAP), an intermediate involved in the bacterial biosynthesis of lysine and meso-diaminopimelic acid, an essential component of bacterial cell walls. The polypeptide is Succinyl-diaminopimelate desuccinylase (Shigella flexneri serotype 5b (strain 8401)).